Here is a 212-residue protein sequence, read N- to C-terminus: Octanoyltransferase (212 aa).

The region spanning 34-208 is the BPL/LPL catalytic domain; sequence GQRQDTLILL…AFERQFNARC (175 aa). Residues 72-79, 139-141, and 152-154 contribute to the substrate site; these read RGGQVTYH, SIG, and GLS. C170 functions as the Acyl-thioester intermediate in the catalytic mechanism.

This sequence belongs to the LipB family.

The protein localises to the cytoplasm. The catalysed reaction is octanoyl-[ACP] + L-lysyl-[protein] = N(6)-octanoyl-L-lysyl-[protein] + holo-[ACP] + H(+). Its pathway is protein modification; protein lipoylation via endogenous pathway; protein N(6)-(lipoyl)lysine from octanoyl-[acyl-carrier-protein]: step 1/2. Catalyzes the transfer of endogenously produced octanoic acid from octanoyl-acyl-carrier-protein onto the lipoyl domains of lipoate-dependent enzymes. Lipoyl-ACP can also act as a substrate although octanoyl-ACP is likely to be the physiological substrate. The sequence is that of Octanoyltransferase from Magnetococcus marinus (strain ATCC BAA-1437 / JCM 17883 / MC-1).